Here is a 435-residue protein sequence, read N- to C-terminus: GTPase Der (435 aa).

EngA-type G domains follow at residues 4-167 (PVVA…PEKD) and 175-350 (IRFS…DNHN). GTP is bound by residues 10–17 (GRPNVGKS), 57–61 (DTGGI), 119–122 (NKAD), 181–188 (GRPNVGKS), 228–232 (DTAGI), and 293–296 (NKWD). The KH-like domain maps to 351-435 (KRVQSATLND…PIHLIERARK (85 aa)).

Belongs to the TRAFAC class TrmE-Era-EngA-EngB-Septin-like GTPase superfamily. EngA (Der) GTPase family. In terms of assembly, associates with the 50S ribosomal subunit.

Functionally, GTPase that plays an essential role in the late steps of ribosome biogenesis. In Levilactobacillus brevis (strain ATCC 367 / BCRC 12310 / CIP 105137 / JCM 1170 / LMG 11437 / NCIMB 947 / NCTC 947) (Lactobacillus brevis), this protein is GTPase Der.